We begin with the raw amino-acid sequence, 101 residues long: Movement protein (101 aa).

Residues 30–50 (EVAILSFVALICFYLLYLWVL) traverse the membrane as a helical segment. A disordered region spans residues 75–101 (VDRSNPIPNIPAPPSQGNPGPFVPGTG).

It belongs to the mastrevirus movement protein family. In terms of assembly, interacts with the capsid protein (CP). Part of a MP-CP-viral DNA complex.

It is found in the host membrane. Involved in the viral transport within, and between cells. This Maize streak virus genotype A (isolate Kenya) (MSV) protein is Movement protein.